Reading from the N-terminus, the 179-residue chain is NAD(P)H-quinone oxidoreductase subunit I, chloroplastic (179 aa).

4Fe-4S ferredoxin-type domains follow at residues 55–84 (GRIH…VDWR) and 95–124 (LNYS…MTEE). [4Fe-4S] cluster contacts are provided by C64, C67, C70, C74, C104, C107, C110, and C114.

Belongs to the complex I 23 kDa subunit family. NDH is composed of at least 16 different subunits, 5 of which are encoded in the nucleus. It depends on [4Fe-4S] cluster as a cofactor.

The protein resides in the plastid. Its subcellular location is the chloroplast thylakoid membrane. The catalysed reaction is a plastoquinone + NADH + (n+1) H(+)(in) = a plastoquinol + NAD(+) + n H(+)(out). It catalyses the reaction a plastoquinone + NADPH + (n+1) H(+)(in) = a plastoquinol + NADP(+) + n H(+)(out). NDH shuttles electrons from NAD(P)H:plastoquinone, via FMN and iron-sulfur (Fe-S) centers, to quinones in the photosynthetic chain and possibly in a chloroplast respiratory chain. The immediate electron acceptor for the enzyme in this species is believed to be plastoquinone. Couples the redox reaction to proton translocation, and thus conserves the redox energy in a proton gradient. The chain is NAD(P)H-quinone oxidoreductase subunit I, chloroplastic from Nuphar advena (Common spatterdock).